The chain runs to 462 residues: UDP-N-acetylmuramoylalanine--D-glutamate ligase (462 aa).

Residue 118 to 124 (GTNGKST) coordinates ATP.

The protein belongs to the MurCDEF family.

It localises to the cytoplasm. It carries out the reaction UDP-N-acetyl-alpha-D-muramoyl-L-alanine + D-glutamate + ATP = UDP-N-acetyl-alpha-D-muramoyl-L-alanyl-D-glutamate + ADP + phosphate + H(+). The protein operates within cell wall biogenesis; peptidoglycan biosynthesis. Its function is as follows. Cell wall formation. Catalyzes the addition of glutamate to the nucleotide precursor UDP-N-acetylmuramoyl-L-alanine (UMA). The sequence is that of UDP-N-acetylmuramoylalanine--D-glutamate ligase from Anaeromyxobacter dehalogenans (strain 2CP-C).